The sequence spans 261 residues: Cytochrome c oxidase subunit 3 (261 aa).

At 1 to 15 (MTHQTHAYHMVNPSP) the chain is on the mitochondrial matrix side. The chain crosses the membrane as a helical span at residues 16-34 (WPLTGALSALLMTSGLAMW). Topologically, residues 35–40 (FHFNST) are mitochondrial intermembrane. The helical transmembrane segment at 41–66 (LLLAMGLLTNILTMYQWWRDIIREST) threads the bilayer. Topologically, residues 67–72 (FQGHHT) are mitochondrial matrix. A helical transmembrane segment spans residues 73–105 (SIVQKGLRYGMILFIISEVFFFSGFFWAFYHSS). Over 106–128 (LAPTPELGGCWPPTGIHPLNPLE) the chain is Mitochondrial intermembrane. Residues 129-152 (VPLLNTSVLLASGVSITWAHHSLM) form a helical membrane-spanning segment. Residues 153–155 (EGN) lie on the Mitochondrial matrix side of the membrane. Residues 156–183 (RKNMLQGLFITISLGVYFTLLQASEYYE) form a helical membrane-spanning segment. The Mitochondrial intermembrane segment spans residues 184–190 (ASFTISD). The chain crosses the membrane as a helical span at residues 191–223 (GVYGSTFFVATGFHGLHVIIGSTFLIVCFLRQL). Residues 224 to 232 (KFHFTSSHH) are Mitochondrial matrix-facing. A helical membrane pass occupies residues 233–256 (FGFEAAAWYWHFVDVVWLFLYVSI). Over 257–261 (YWWGS) the chain is Mitochondrial intermembrane.

It belongs to the cytochrome c oxidase subunit 3 family. As to quaternary structure, component of the cytochrome c oxidase (complex IV, CIV), a multisubunit enzyme composed of 14 subunits. The complex is composed of a catalytic core of 3 subunits MT-CO1, MT-CO2 and MT-CO3, encoded in the mitochondrial DNA, and 11 supernumerary subunits COX4I, COX5A, COX5B, COX6A, COX6B, COX6C, COX7A, COX7B, COX7C, COX8 and NDUFA4, which are encoded in the nuclear genome. The complex exists as a monomer or a dimer and forms supercomplexes (SCs) in the inner mitochondrial membrane with NADH-ubiquinone oxidoreductase (complex I, CI) and ubiquinol-cytochrome c oxidoreductase (cytochrome b-c1 complex, complex III, CIII), resulting in different assemblies (supercomplex SCI(1)III(2)IV(1) and megacomplex MCI(2)III(2)IV(2)).

The protein resides in the mitochondrion inner membrane. It catalyses the reaction 4 Fe(II)-[cytochrome c] + O2 + 8 H(+)(in) = 4 Fe(III)-[cytochrome c] + 2 H2O + 4 H(+)(out). Its function is as follows. Component of the cytochrome c oxidase, the last enzyme in the mitochondrial electron transport chain which drives oxidative phosphorylation. The respiratory chain contains 3 multisubunit complexes succinate dehydrogenase (complex II, CII), ubiquinol-cytochrome c oxidoreductase (cytochrome b-c1 complex, complex III, CIII) and cytochrome c oxidase (complex IV, CIV), that cooperate to transfer electrons derived from NADH and succinate to molecular oxygen, creating an electrochemical gradient over the inner membrane that drives transmembrane transport and the ATP synthase. Cytochrome c oxidase is the component of the respiratory chain that catalyzes the reduction of oxygen to water. Electrons originating from reduced cytochrome c in the intermembrane space (IMS) are transferred via the dinuclear copper A center (CU(A)) of subunit 2 and heme A of subunit 1 to the active site in subunit 1, a binuclear center (BNC) formed by heme A3 and copper B (CU(B)). The BNC reduces molecular oxygen to 2 water molecules using 4 electrons from cytochrome c in the IMS and 4 protons from the mitochondrial matrix. In Equus caballus (Horse), this protein is Cytochrome c oxidase subunit 3 (MT-CO3).